The chain runs to 324 residues: Lactonase drp35 (324 aa).

Ca(2+) is bound by residues glutamate 47, serine 109, glycine 111, aspartate 129, threonine 132, tyrosine 134, aspartate 137, asparagine 184, aspartate 235, and serine 236. Aspartate 235 serves as the catalytic Proton donor.

It belongs to the SMP-30/CGR1 family. Ca(2+) is required as a cofactor.

It is found in the cytoplasm. Its function is as follows. Exhibits lactonase activity. Acts in cells with perturbed membrane integrity and is possibly related to the membrane homeostasis. The polypeptide is Lactonase drp35 (drp35) (Staphylococcus aureus (strain MRSA252)).